An 81-amino-acid chain; its full sequence is LYR motif-containing protein At3g19508 (81 aa).

Belongs to the complex I LYR family. LYRM9 subfamily.

The protein is LYR motif-containing protein At3g19508 of Arabidopsis thaliana (Mouse-ear cress).